We begin with the raw amino-acid sequence, 168 residues long: Photosystem I assembly protein Ycf3 (168 aa).

TPR repeat units follow at residues 35–68 (AFTYYRDGMSAQSEGNYAEALQNYYEAMRLEIDP), 72–105 (SYILYNIGLIHTSNGEHTKALEYYFRALERNPFL), and 120–153 (GEQAIRQGDSEIAEAWFDQAAEYWKQAIALTPGN).

The protein belongs to the Ycf3 family.

Its subcellular location is the plastid. The protein resides in the chloroplast thylakoid membrane. In terms of biological role, essential for the assembly of the photosystem I (PSI) complex. May act as a chaperone-like factor to guide the assembly of the PSI subunits. The protein is Photosystem I assembly protein Ycf3 of Oenothera elata subsp. hookeri (Hooker's evening primrose).